A 340-amino-acid chain; its full sequence is Ornithine carbamoyltransferase (340 aa).

Carbamoyl phosphate is bound by residues 57 to 60, Q84, R108, and 135 to 138; these read STRT and HPTQ. Residues N167, D231, and 235 to 236 contribute to the L-ornithine site; that span reads SM. Residues 272-273 and R317 contribute to the carbamoyl phosphate site; that span reads CL.

It belongs to the aspartate/ornithine carbamoyltransferase superfamily. OTCase family.

The protein resides in the cytoplasm. The catalysed reaction is carbamoyl phosphate + L-ornithine = L-citrulline + phosphate + H(+). It participates in amino-acid biosynthesis; L-arginine biosynthesis; L-arginine from L-ornithine and carbamoyl phosphate: step 1/3. Reversibly catalyzes the transfer of the carbamoyl group from carbamoyl phosphate (CP) to the N(epsilon) atom of ornithine (ORN) to produce L-citrulline. In Lactiplantibacillus plantarum (strain ATCC BAA-793 / NCIMB 8826 / WCFS1) (Lactobacillus plantarum), this protein is Ornithine carbamoyltransferase (argF).